We begin with the raw amino-acid sequence, 271 residues long: MIRTLLLSALVAGALSCGYPTYEVEDDVSRVVGGQEATPNTWPWQVSLQVLSSGRWRHNCGGSLVANNWVLTAAHCLSNYQTYRVLLGAHSLSNPGAGSAAVQVSKLVVHQRWNSQNVGNGYDIALIKLASPVTLSKNIQTACLPPAGTILPRNYVCYVTGWGLLQTNGNSPDTLRQGRLLVVDYATCSSASWWGSSVKSSMVCAGGDGVTSSCNGDSGGPLNCRASNGQWQVHGIVSFGSSLGCNYPRKPSVFTRVSNYIDWINSVMARN.

The first 16 residues, 1-16 (MIRTLLLSALVAGALS), serve as a signal peptide directing secretion. Positions 17–30 (CGYPTYEVEDDVSR) are cleaved as a propeptide — activation peptide. Positions 31 to 269 (VVGGQEATPN…YIDWINSVMA (239 aa)) constitute a Peptidase S1 domain. The cysteines at positions 60 and 76 are disulfide-linked. Residues histidine 75 and aspartate 123 each act as charge relay system in the active site. 3 disulfide bridges follow: cysteine 157/cysteine 224, cysteine 188/cysteine 204, and cysteine 214/cysteine 245. Serine 218 serves as the catalytic Charge relay system.

It belongs to the peptidase S1 family. Elastase subfamily. In terms of assembly, interacts with CPA1. Interacts with SERPINA1. In terms of tissue distribution, highly expressed in pancreas (at mRNA and protein levels). Also expressed in adrenal gland and small intestine.

The protein resides in the secreted. It carries out the reaction Preferential cleavage: Leu-|-Xaa, Met-|-Xaa and Phe-|-Xaa. Hydrolyzes elastin.. Functionally, elastase that enhances insulin signaling and might have a physiologic role in cellular glucose metabolism. Circulates in plasma and reduces platelet hyperactivation, triggers both insulin secretion and degradation, and increases insulin sensitivity. The chain is Chymotrypsin-like elastase family member 2A from Mus musculus (Mouse).